Consider the following 229-residue polypeptide: Large ribosomal subunit protein uL1 (229 aa).

This sequence belongs to the universal ribosomal protein uL1 family. In terms of assembly, part of the 50S ribosomal subunit.

Binds directly to 23S rRNA. The L1 stalk is quite mobile in the ribosome, and is involved in E site tRNA release. Functionally, protein L1 is also a translational repressor protein, it controls the translation of the L11 operon by binding to its mRNA. The polypeptide is Large ribosomal subunit protein uL1 (Haemophilus ducreyi (strain 35000HP / ATCC 700724)).